Reading from the N-terminus, the 266-residue chain is Undecaprenyl-diphosphatase (266 aa).

The next 8 helical transmembrane spans lie at 1–21 (MDTF…FLPI), 39–59 (QGLS…VIYF), 87–107 (WWII…KDFI), 114–134 (AEVI…ADKM), 149–169 (ALLI…RSGA), 183–203 (AAAR…AILV), 218–238 (ALIL…HYFL), and 246–266 (MTPF…FIFF).

This sequence belongs to the UppP family.

The protein resides in the cell inner membrane. The catalysed reaction is di-trans,octa-cis-undecaprenyl diphosphate + H2O = di-trans,octa-cis-undecaprenyl phosphate + phosphate + H(+). Functionally, catalyzes the dephosphorylation of undecaprenyl diphosphate (UPP). Confers resistance to bacitracin. This is Undecaprenyl-diphosphatase from Shewanella baltica (strain OS223).